Here is a 78-residue protein sequence, read N- to C-terminus: Large ribosomal subunit protein bL28 (78 aa).

The segment at 1–25 (MSRVCQVTGKRPAVGNNRSHAKNAT) is disordered.

This sequence belongs to the bacterial ribosomal protein bL28 family.

The sequence is that of Large ribosomal subunit protein bL28 from Aliivibrio salmonicida (strain LFI1238) (Vibrio salmonicida (strain LFI1238)).